A 172-amino-acid polypeptide reads, in one-letter code: Lytic chitin monooxygenase (172 aa).

The N-terminal stretch at 1 to 30 (MHAGRKTAVLIGAALAPVIAVSLPAASASA) is a signal peptide. The Cu cation site is built by histidine 31 and histidine 106. The 138-residue stretch at 31–168 (HGYISNPPSR…DNAFYACIDV (138 aa)) folds into the Chitin-binding type-4 domain.

Cu(2+) serves as cofactor.

It localises to the secreted. It catalyses the reaction [(1-&gt;4)-N-acetyl-beta-D-glucosaminyl]n+m + reduced acceptor + O2 = [(1-&gt;4)-N-acetyl-beta-D-glucosaminyl]m-1-(1-&gt;4)-2-(acetylamino)-2-deoxy-D-glucono-1,5-lactone + [(1-&gt;4)-N-acetyl-beta-D-glucosaminyl]n + acceptor + H2O.. It participates in glycan degradation; chitin degradation. In terms of biological role, involved in chitin degradation. Catalyzes the oxidative cleavage of glycosidic bonds in chitin via a copper-dependent mechanism, leading to oxidized chitooligomers with degrees of polymerization of 4-6. Is not active on cellulose. This chain is Lytic chitin monooxygenase, found in Streptomyces ambofaciens (strain ATCC 23877 / 3486 / DSM 40053 / JCM 4204 / NBRC 12836 / NRRL B-2516).